Reading from the N-terminus, the 389-residue chain is Histidinol-phosphate aminotransferase (389 aa).

Position 233 is an N6-(pyridoxal phosphate)lysine (K233).

The protein belongs to the class-II pyridoxal-phosphate-dependent aminotransferase family. It depends on pyridoxal 5'-phosphate as a cofactor.

It carries out the reaction L-histidinol phosphate + 2-oxoglutarate = 3-(imidazol-4-yl)-2-oxopropyl phosphate + L-glutamate. It participates in amino-acid biosynthesis; L-histidine biosynthesis; L-histidine from 5-phospho-alpha-D-ribose 1-diphosphate: step 7/9. In Candida maltosa (Yeast), this protein is Histidinol-phosphate aminotransferase (HIS5).